Reading from the N-terminus, the 172-residue chain is Large ribosomal subunit protein uL10 (172 aa).

This sequence belongs to the universal ribosomal protein uL10 family. Part of the ribosomal stalk of the 50S ribosomal subunit. The N-terminus interacts with L11 and the large rRNA to form the base of the stalk. The C-terminus forms an elongated spine to which L12 dimers bind in a sequential fashion forming a multimeric L10(L12)X complex.

In terms of biological role, forms part of the ribosomal stalk, playing a central role in the interaction of the ribosome with GTP-bound translation factors. This Bartonella henselae (strain ATCC 49882 / DSM 28221 / CCUG 30454 / Houston 1) (Rochalimaea henselae) protein is Large ribosomal subunit protein uL10.